Consider the following 99-residue polypeptide: uncharacterized protein (99 aa).

The chain crosses the membrane as a helical span at residues 10–29 (ELSVHTGTVTHTIFVYVFLG).

The protein resides in the membrane. This is an uncharacterized protein from Schizosaccharomyces pombe (strain 972 / ATCC 24843) (Fission yeast).